The sequence spans 618 residues: DNA mismatch repair protein MutL (618 aa).

The segment covering 366–378 (AEPTAAREPATPR) has biased composition (low complexity). Residues 366 to 403 (AEPTAAREPATPRYSDGASGGNGGRQSAGGWPHAQPGY) form a disordered region. Gly residues predominate over residues 383-392 (ASGGNGGRQS).

The protein belongs to the DNA mismatch repair MutL/HexB family.

Its function is as follows. This protein is involved in the repair of mismatches in DNA. It is required for dam-dependent methyl-directed DNA mismatch repair. May act as a 'molecular matchmaker', a protein that promotes the formation of a stable complex between two or more DNA-binding proteins in an ATP-dependent manner without itself being part of a final effector complex. This Salmonella typhi protein is DNA mismatch repair protein MutL.